The primary structure comprises 787 residues: MANILKKWIESDRRELRRINKIANKVESYAKQMSELTDEQLQAKTDEFRERYKKGESLDHMLPEAFAVSREGAKRVLGLYPFHVQIMGGIVLHEGNIAEMRTGEGKTLTATMPVYLNAISGKGVHVITVNEYLSKRDATEMGQLYNWLGCSVGINNSEMSPDQKREAYKADIMYSTNSEIGFDYLRDNMAVYKEDQVQRGLNYALVDEVDSILIDEARTPLIISGPGTGTSKLYKQTDRFVKQLKKDVDYKIDLESKTVSLTDEGIKKAEKYFNLKNLYDPENTALTHHLDQALRANYIMLLDKDYVVQDGEVLIVDSFTGRVMEGRRFSDGLHQAIEAKEGVEIQEENKTMANITYQNLFRMYNKLAGMTGTAKTEQEEFREIYNMETITIPTNRPVQRKDEPDLLYPTLQSKFAAVVDRIKKLHAKGQPILVGTVAVETSEYLSQLLDKENIPHVVLNAKNHAKEAEIVKNAGQKGAVTIATNMAGRGTDIKLGPGVREIGGLAVIGTERHESRRIDNQLRGRSGRQGDPGLSQFYLSLEDDLMKRFGGDRIKAFLERMKVNDEDAVIKSRFLTHQVESAQKRVEGNNYDSRKNVLQYDDVMREQREIIYKERQQIITEDKSLKWVLMPMFRRTIQREVDQHTLGDKKDWDLQGIVDFAEEVLIKPDTITVKDLEGKSPQEMVDYLMTFAQGVYKEKQKQLYDPAQMLEFEKVVILRVVDSHWTDHIDIMDQFRQSVGLRGYGQLNPLVEYQTAGYHMFEQMIADIEYETTRLFMKSEIRQNVTR.

ATP is bound by residues Gln85, 103-107 (GEGKT), and Asp492.

Belongs to the SecA family. As to quaternary structure, monomer and homodimer. Part of the essential Sec protein translocation apparatus which comprises SecA, SecYEG and auxiliary proteins SecDF. Other proteins may also be involved.

The protein resides in the cell membrane. The protein localises to the cytoplasm. It catalyses the reaction ATP + H2O + cellular proteinSide 1 = ADP + phosphate + cellular proteinSide 2.. In terms of biological role, part of the Sec protein translocase complex. Interacts with the SecYEG preprotein conducting channel. Has a central role in coupling the hydrolysis of ATP to the transfer of proteins into and across the cell membrane, serving as an ATP-driven molecular motor driving the stepwise translocation of polypeptide chains across the membrane. In Limosilactobacillus reuteri (strain DSM 20016) (Lactobacillus reuteri), this protein is Protein translocase subunit SecA.